We begin with the raw amino-acid sequence, 929 residues long: Valine--tRNA ligase (929 aa).

The short motif at 59 to 69 (PNVTGSLHMGH) is the 'HIGH' region element. The 'KMSKS' region signature appears at 557–561 (KMSKS). Lys-560 is a binding site for ATP. A coiled-coil region spans residues 862–929 (LVDLDALRGR…LARQRLSDLG (68 aa)).

Belongs to the class-I aminoacyl-tRNA synthetase family. ValS type 1 subfamily. In terms of assembly, monomer.

It is found in the cytoplasm. The catalysed reaction is tRNA(Val) + L-valine + ATP = L-valyl-tRNA(Val) + AMP + diphosphate. Its function is as follows. Catalyzes the attachment of valine to tRNA(Val). As ValRS can inadvertently accommodate and process structurally similar amino acids such as threonine, to avoid such errors, it has a 'posttransfer' editing activity that hydrolyzes mischarged Thr-tRNA(Val) in a tRNA-dependent manner. This is Valine--tRNA ligase from Prochlorococcus marinus (strain MIT 9313).